Consider the following 278-residue polypeptide: SLAM family member 8 (278 aa).

Residues 1-20 (MWSLWSLLLFEALLPVVVVS) form the signal peptide. At 21-231 (VQVLSKVGDS…AASGKASYKD (211 aa)) the chain is on the extracellular side. 2 N-linked (GlcNAc...) asparagine glycosylation sites follow: Asn-83 and Asn-154. In terms of domain architecture, Ig-like C2-type spans 126-213 (PEVQVFTAAA…PVSWDMTTVT (88 aa)). Cys-150 and Cys-199 are disulfide-bonded. The chain crosses the membrane as a helical span at residues 232–252 (VLLVVVPITLFLILAGLFGAW). The Cytoplasmic segment spans residues 253 to 278 (HHGLCSGKKKDACTDGVLPETENALV).

The protein resides in the membrane. In terms of biological role, may play a role in B-lineage commitment and/or modulation of signaling through the B-cell receptor. This Mus musculus (Mouse) protein is SLAM family member 8 (Slamf8).